The sequence spans 441 residues: Maltokinase (441 aa).

Belongs to the aminoglycoside phosphotransferase family. Monomer.

The catalysed reaction is D-maltose + ATP = alpha-maltose 1-phosphate + ADP + H(+). It participates in glycan biosynthesis; glycogen biosynthesis. In terms of biological role, catalyzes the ATP-dependent phosphorylation of maltose to maltose 1-phosphate. Is involved in a branched alpha-glucan biosynthetic pathway from trehalose, together with TreS, GlgE and GlgB. In Mycolicibacterium vanbaalenii (strain DSM 7251 / JCM 13017 / BCRC 16820 / KCTC 9966 / NRRL B-24157 / PYR-1) (Mycobacterium vanbaalenii), this protein is Maltokinase (mak).